A 329-amino-acid chain; its full sequence is Replication factor C small subunit 1 (329 aa).

44–51 is a binding site for ATP; sequence GPPGTGKT.

It belongs to the activator 1 small subunits family. RfcS subfamily. Heteromultimer composed of small subunits (RfcS) and large subunits (RfcL).

Part of the RFC clamp loader complex which loads the PCNA sliding clamp onto DNA. This is Replication factor C small subunit 1 from Pyrobaculum aerophilum (strain ATCC 51768 / DSM 7523 / JCM 9630 / CIP 104966 / NBRC 100827 / IM2).